A 151-amino-acid polypeptide reads, in one-letter code: Large ribosomal subunit protein uL15 (151 aa).

A disordered region spans residues 37–57 (GMRGQKSRSGRPTRPGFEGGQ).

It belongs to the universal ribosomal protein uL15 family. In terms of assembly, part of the 50S ribosomal subunit.

Functionally, binds to the 23S rRNA. The chain is Large ribosomal subunit protein uL15 from Prochlorococcus marinus (strain MIT 9313).